Here is a 309-residue protein sequence, read N- to C-terminus: Dicarboxylate carrier UCP2 (309 aa).

The Mitochondrial intermembrane portion of the chain corresponds to 1–16; sequence MVGFKATDVPPTATVK. Solcar repeat units follow at residues 11–106, 114–203, and 212–297; these read PTAT…VKQF, ASIG…IKDA, and DDLP…LKRA. Positions 16–63 are important for interaction with long-chain fatty acids; that stretch reads KFLGAGTAACIADLITFPLDTAKVRLQIQGESQGPVHATASAQYRGVM. A helical transmembrane segment spans residues 17 to 40; that stretch reads FLGAGTAACIADLITFPLDTAKVR. Residues 41–77 are Mitochondrial matrix-facing; that stretch reads LQIQGESQGPVHATASAQYRGVMGTILTMVRTEGPRS. A helical membrane pass occupies residues 78–103; the sequence is LYNGLVAGLQRQMSFASVRIGLYDSV. At 104 to 119 the chain is on the mitochondrial intermembrane side; it reads KQFYTKGSEHASIGSR. Residues 120-145 traverse the membrane as a helical segment; it reads LLAGSTTGALAVAVAQPTDVVKVRFQ. The Mitochondrial matrix segment spans residues 146 to 173; the sequence is AQARAGGGRRYQSTVNAYKTIAREEGFR. The chain crosses the membrane as a helical span at residues 174-199; sequence GLWKGTSPNVARNAIVNCAELVTYDL. At 200–217 the chain is on the mitochondrial intermembrane side; the sequence is IKDALLKANLMTDDLPCH. The chain crosses the membrane as a helical span at residues 218 to 242; sequence FTSAFGAGFCTTVIASPVDVVKTRY. Over 243-268 the chain is Mitochondrial matrix; the sequence is MNSALGQYSSAGHCALTMLQKEGPRA. The helical transmembrane segment at 269–294 threads the bilayer; the sequence is FYKGFMPSFLRLGSWNVVMFVTYEQL. The tract at residues 278–285 is important for interaction with long-chain fatty acids; sequence LRLGSWNV. Residues 295–309 lie on the Mitochondrial intermembrane side of the membrane; sequence KRALMAACTSREAPF.

This sequence belongs to the mitochondrial carrier (TC 2.A.29) family. As to quaternary structure, homotetramer. Adopts an asymmetrical dimer of dimers functional form. Interacts with MICU1 (when methylated); leading to decrease the calcium sensitivity of MICU1.

It localises to the mitochondrion inner membrane. It catalyses the reaction L-aspartate(out) + phosphate(in) + H(+)(in) = L-aspartate(in) + phosphate(out) + H(+)(out). The enzyme catalyses oxaloacetate(out) + phosphate(in) + H(+)(in) = oxaloacetate(in) + phosphate(out) + H(+)(out). It carries out the reaction (S)-malate(out) + phosphate(in) + H(+)(in) = (S)-malate(in) + phosphate(out) + H(+)(out). The catalysed reaction is malonate(out) + phosphate(in) + H(+)(in) = malonate(in) + phosphate(out) + H(+)(out). It catalyses the reaction sulfate(out) + phosphate(in) + H(+)(in) = sulfate(in) + phosphate(out) + H(+)(out). The enzyme catalyses (S)-malate(out) = (S)-malate(in). It carries out the reaction L-aspartate(out) = L-aspartate(in). The catalysed reaction is phosphate(in) = phosphate(out). It catalyses the reaction chloride(in) = chloride(out). The enzyme catalyses H(+)(in) = H(+)(out). It carries out the reaction a long-chain fatty acid(out) = a long-chain fatty acid(in). Its function is as follows. Antiporter that exports dicarboxylate intermediates of the Krebs cycle in exchange for phosphate plus a proton across the inner membrane of mitochondria, a process driven by mitochondrial motive force with an overall impact on glycolysis, glutaminolysis and glutathione-dependent redox balance. Continuous export of oxaloacetate and related four-carbon dicarboxylates from mitochondrial matrix into the cytosol negatively regulates the oxidation of acetyl-CoA substrates via the Krebs cycle lowering the ATP/ADP ratio and reactive oxygen species (ROS) production. May mediate inducible proton entry into the mitochondrial matrix affecting ATP turnover as a protection mechanism against oxidative stress. The proton currents are most likely associated with fatty acid flipping across the inner membrane of mitochondria in a metabolic process regulated by free fatty acids and purine nucleotides. Regulates the use of glucose as a source of energy. Required for glucose-induced DRP1-dependent mitochondrial fission and neuron activation in the ventromedial nucleus of the hypothalamus (VMH). This mitochondrial adaptation mechanism modulates the VMH pool of glucose-excited neurons with an impact on systemic glucose homeostasis. Regulates ROS levels and metabolic reprogramming of macrophages during the resolution phase of inflammation. Attenuates ROS production in response to IL33 to preserve the integrity of the Krebs cycle required for persistent production of itaconate and subsequent GATA3-dependent differentiation of inflammation-resolving alternatively activated macrophages. Can unidirectionally transport anions including L-malate, L-aspartate, phosphate and chloride ions. Does not mediate adaptive thermogenesis. The protein is Dicarboxylate carrier UCP2 (UCP2) of Pongo abelii (Sumatran orangutan).